The following is a 286-amino-acid chain: Bifunctional protein FolD (286 aa).

Residues 165 to 167 (GRS) and S190 each bind NADP(+).

It belongs to the tetrahydrofolate dehydrogenase/cyclohydrolase family. In terms of assembly, homodimer.

The catalysed reaction is (6R)-5,10-methylene-5,6,7,8-tetrahydrofolate + NADP(+) = (6R)-5,10-methenyltetrahydrofolate + NADPH. The enzyme catalyses (6R)-5,10-methenyltetrahydrofolate + H2O = (6R)-10-formyltetrahydrofolate + H(+). It participates in one-carbon metabolism; tetrahydrofolate interconversion. Functionally, catalyzes the oxidation of 5,10-methylenetetrahydrofolate to 5,10-methenyltetrahydrofolate and then the hydrolysis of 5,10-methenyltetrahydrofolate to 10-formyltetrahydrofolate. The chain is Bifunctional protein FolD from Staphylococcus aureus (strain USA300).